An 804-amino-acid polypeptide reads, in one-letter code: Probable phosphoketolase (804 aa).

The protein belongs to the XFP family. It depends on thiamine diphosphate as a cofactor.

The sequence is that of Probable phosphoketolase from Mycobacterium avium (strain 104).